Consider the following 278-residue polypeptide: Sulfur carrier protein FdhD (278 aa).

The active-site Cysteine persulfide intermediate is Cys-121. Residue Phe-260 to Arg-265 participates in Mo-bis(molybdopterin guanine dinucleotide) binding.

The protein belongs to the FdhD family.

The protein localises to the cytoplasm. In terms of biological role, required for formate dehydrogenase (FDH) activity. Acts as a sulfur carrier protein that transfers sulfur from IscS to the molybdenum cofactor prior to its insertion into FDH. The sequence is that of Sulfur carrier protein FdhD from Salmonella heidelberg (strain SL476).